The primary structure comprises 265 residues: Undecaprenyl-diphosphatase (265 aa).

8 helical membrane passes run 1–21, 39–59, 87–107, 110–130, 144–164, 187–207, 217–237, and 244–264; these read MDFL…FLPI, QGVG…ILYF, WAVV…LDYI, ALRA…LLAA, IGFK…IPGT, FSFF…LLTI, LGFL…IHFF, and FGMW…YLLF.

The protein belongs to the UppP family.

Its subcellular location is the cell inner membrane. It catalyses the reaction di-trans,octa-cis-undecaprenyl diphosphate + H2O = di-trans,octa-cis-undecaprenyl phosphate + phosphate + H(+). Its function is as follows. Catalyzes the dephosphorylation of undecaprenyl diphosphate (UPP). Confers resistance to bacitracin. This chain is Undecaprenyl-diphosphatase, found in Idiomarina loihiensis (strain ATCC BAA-735 / DSM 15497 / L2-TR).